The chain runs to 159 residues: Trafficking protein particle complex subunit 6A (159 aa).

Ser-33 carries the post-translational modification Phosphoserine.

This sequence belongs to the TRAPP small subunits family. BET3 subfamily. In terms of assembly, part of the multisubunit transport protein particle (TRAPP) complex. Heterodimer with TRAPPC3. The heterodimer TRAPPC3-TRAPPC6A interacts with TRAPPC2L. Interacts with TRAPPC2L.

The protein localises to the golgi apparatus. It is found in the cis-Golgi network. The protein resides in the endoplasmic reticulum. Functionally, may play a role in vesicular transport during the biogenesis of melanosomes. In Homo sapiens (Human), this protein is Trafficking protein particle complex subunit 6A.